The chain runs to 310 residues: Tyrosine recombinase XerC (310 aa).

Positions 1 to 92 constitute a Core-binding (CB) domain; the sequence is MDELIKEFDR…SLRAFFKYLH (92 aa). Residues 113–300 enclose the Tyr recombinase domain; that stretch reads YIPAVLSVDE…SVNRLMAVYD (188 aa). Residues R153, K177, H252, R255, and H278 contribute to the active site. Catalysis depends on Y287, which acts as the O-(3'-phospho-DNA)-tyrosine intermediate.

This sequence belongs to the 'phage' integrase family. XerC subfamily. As to quaternary structure, forms a cyclic heterotetrameric complex composed of two molecules of XerC and two molecules of XerD.

It localises to the cytoplasm. Its function is as follows. Site-specific tyrosine recombinase, which acts by catalyzing the cutting and rejoining of the recombining DNA molecules. The XerC-XerD complex is essential to convert dimers of the bacterial chromosome into monomers to permit their segregation at cell division. It also contributes to the segregational stability of plasmids. The polypeptide is Tyrosine recombinase XerC (Syntrophus aciditrophicus (strain SB)).